The primary structure comprises 388 residues: Mannitol-1-phosphate 5-dehydrogenase (388 aa).

Ala5–Gly16 provides a ligand contact to NAD(+). The active site involves Lys213.

The protein belongs to the mannitol dehydrogenase family. In terms of assembly, monomer.

The enzyme catalyses D-mannitol 1-phosphate + NAD(+) = beta-D-fructose 6-phosphate + NADH + H(+). Functionally, catalyzes the NAD(H)-dependent interconversion of D-fructose 6-phosphate and D-mannitol 1-phosphate in the mannitol metabolic pathway. This is Mannitol-1-phosphate 5-dehydrogenase (mpdA) from Aspergillus clavatus (strain ATCC 1007 / CBS 513.65 / DSM 816 / NCTC 3887 / NRRL 1 / QM 1276 / 107).